The sequence spans 424 residues: 3-isopropylmalate dehydratase large subunit 1 (424 aa).

[4Fe-4S] cluster-binding residues include Cys-303, Cys-363, and Cys-366.

It belongs to the aconitase/IPM isomerase family. LeuC type 2 subfamily. In terms of assembly, heterodimer of LeuC and LeuD. [4Fe-4S] cluster is required as a cofactor.

It catalyses the reaction (2R,3S)-3-isopropylmalate = (2S)-2-isopropylmalate. Its pathway is amino-acid biosynthesis; L-leucine biosynthesis; L-leucine from 3-methyl-2-oxobutanoate: step 2/4. Catalyzes the isomerization between 2-isopropylmalate and 3-isopropylmalate, via the formation of 2-isopropylmaleate. The polypeptide is 3-isopropylmalate dehydratase large subunit 1 (Pyrococcus furiosus (strain ATCC 43587 / DSM 3638 / JCM 8422 / Vc1)).